The primary structure comprises 330 residues: Methionyl-tRNA formyltransferase (330 aa).

121–124 (SLLP) is a binding site for (6S)-5,6,7,8-tetrahydrofolate.

Belongs to the Fmt family.

It carries out the reaction L-methionyl-tRNA(fMet) + (6R)-10-formyltetrahydrofolate = N-formyl-L-methionyl-tRNA(fMet) + (6S)-5,6,7,8-tetrahydrofolate + H(+). Functionally, attaches a formyl group to the free amino group of methionyl-tRNA(fMet). The formyl group appears to play a dual role in the initiator identity of N-formylmethionyl-tRNA by promoting its recognition by IF2 and preventing the misappropriation of this tRNA by the elongation apparatus. The polypeptide is Methionyl-tRNA formyltransferase (Burkholderia cenocepacia (strain HI2424)).